A 957-amino-acid chain; its full sequence is ERC protein 2 (957 aa).

Residues M1–G13 show a composition bias toward polar residues. The interval M1–L44 is disordered. The segment covering S14–P25 has biased composition (low complexity). A phosphoserine mark is found at S65 and S666. Positions R140–D917 form a coiled coil. An involved in binding to RIMS1 region spans residues D760 to A957. A disordered region spans residues D918–A957. The segment covering H922–H943 has biased composition (basic residues). The segment covering D948–A957 has biased composition (acidic residues).

As to quaternary structure, interacts with BSN, ERC1, PPFIA1, PPFIA2, PPFIA3 and PPFIA4. Interacts through its C-terminus with the PDZ domain of RIMS1. Part of a complex consisting of ERC2, RIMS1 and UNC13A. In terms of tissue distribution, predominantly expressed in brain, including hippocampus, cortex, cerebellum, amygdala and olfactory bulb.

It is found in the cytoplasm. It localises to the synapse. Its subcellular location is the presynaptic active zone. The protein resides in the cytoskeleton. Its function is as follows. Thought to be involved in the organization of the cytomatrix at the nerve terminals active zone (CAZ) which regulates neurotransmitter release. Seems to act together with BSN. May recruit liprin-alpha proteins to the CAZ. This Rattus norvegicus (Rat) protein is ERC protein 2 (Erc2).